The primary structure comprises 536 residues: MTSLAILPQLKRTITDIMDEELYQSPSSPNSMTSFPSGTGNLMSNTNHNTFNQSNNTPFNMNYNHISNRNSINSSPNLSATTFNNANNLGNVLNIPDSFLEQLASQDYIDHLKSQQQQEQAFENPDDIYVQDVHENQVNPFNDYGNPDSFIRAQEQQSQLPQPQQPISQQDKQRPQSQQQQATKAPLPQAFPTRRRRKITLLNDIGGSSTRKKHFDEDYLLYNPDISPGHIVTDCSLDSSLVIPPNSNELFLTESESPEFANDIIPGYENDYLFLDDDDEQIEEDVSDDEGDNYFQVDEDFDDYLMNNNGYDGYPTFNNYESSGNNTDIINNNNNIVDETISDANSNSELEVVFDQPKEVSPSAISPASPDSDDMMIDVEDETEIADATAAKEEINKKHSKSGKKESKSQKENQLTTTTKSKKHSHGISGAEITLNNPNHQCNLINPSTGEPCNKQFSRPYDLIRHQDTIHASMKKIFRCVICEGRLNGGPGNGKEKTFSRGDALSRHIKIKHGLVGQDALDLINEAKENVEYIPV.

Composition is skewed to low complexity over residues 154–181 (QEQQSQLPQPQQPISQQDKQRPQSQQQQ) and 361–370 (SPSAISPASP). Disordered stretches follow at residues 154–196 (QEQQ…TRRR), 353–375 (VFDQPKEVSPSAISPASPDSDDM), and 393–434 (EEIN…AEIT). Over residues 393–411 (EEINKKHSKSGKKESKSQK) the composition is skewed to basic and acidic residues. A C2H2-type zinc finger spans residues 440–471 (HQCNLINPSTGEPCNKQFSRPYDLIRHQDTIH).

The protein resides in the nucleus. Its function is as follows. Transcriptional activator of a number of genes encoding proteasomal subunits. Binds to the DNA sequence 5'-GAAGGCAAAA-3', enriched in regions upstream of proteasome genes. The sequence is that of Transcriptional regulator RPN4 (RPN4) from Candida albicans (strain SC5314 / ATCC MYA-2876) (Yeast).